Consider the following 314-residue polypeptide: 1D-myo-inositol 2-acetamido-2-deoxy-alpha-D-glucopyranoside deacetylase 2 (314 aa).

3 residues coordinate Zn(2+): His-25, Asp-28, and His-161.

It belongs to the MshB deacetylase family. It depends on Zn(2+) as a cofactor.

The catalysed reaction is 1D-myo-inositol 2-acetamido-2-deoxy-alpha-D-glucopyranoside + H2O = 1D-myo-inositol 2-amino-2-deoxy-alpha-D-glucopyranoside + acetate. Its function is as follows. Catalyzes the deacetylation of 1D-myo-inositol 2-acetamido-2-deoxy-alpha-D-glucopyranoside (GlcNAc-Ins) in the mycothiol biosynthesis pathway. This is 1D-myo-inositol 2-acetamido-2-deoxy-alpha-D-glucopyranoside deacetylase 2 from Frankia casuarinae (strain DSM 45818 / CECT 9043 / HFP020203 / CcI3).